Here is an 87-residue protein sequence, read N- to C-terminus: Small ribosomal subunit protein uS15c (87 aa).

It belongs to the universal ribosomal protein uS15 family. In terms of assembly, part of the 30S ribosomal subunit.

Its subcellular location is the plastid. It is found in the chloroplast. This chain is Small ribosomal subunit protein uS15c (rps15), found in Illicium oligandrum (Star anise).